The chain runs to 780 residues: Kazrin (780 aa).

Residues 79–261 are a coiled coil; the sequence is AQVLLREEVV…LATLTKDVPK (183 aa). Residues 295-430 are disordered; it reads QQTLYHSHPP…TRHSLSLSEG (136 aa). Phosphoserine occurs at positions 357, 372, and 392. Residues 416–427 show a composition bias toward polar residues; sequence SQCSPTRHSLSL. SAM domains lie at 451–516, 529–593, and 617–684; these read WKAG…YRDA, DHHW…LYQV, and WTNQ…STVF. Residues 692–780 are disordered; it reads IRESERFGTP…EYSSLEVTNV (89 aa). Positions 760 to 771 are enriched in basic and acidic residues; sequence LQGRPEQCRLEE.

It belongs to the kazrin family.

It localises to the cell junction. The protein localises to the nucleus. It is found in the cytoplasm. Its subcellular location is the cytoskeleton. Component of the cornified envelope of keratinocytes. May be involved in the interplay between adherens junctions and desmosomes. The function in the nucleus is not known. This chain is Kazrin (Kazn), found in Rattus norvegicus (Rat).